We begin with the raw amino-acid sequence, 408 residues long: Aminoacylase-1 (408 aa).

Residue His-80 coordinates Zn(2+). Asp-82 is an active-site residue. Residue Asp-113 participates in Zn(2+) binding. Catalysis depends on Glu-147, which acts as the Proton acceptor. Glu-148, Glu-175, and His-373 together coordinate Zn(2+).

It belongs to the peptidase M20A family. In terms of assembly, homodimer. Interacts with SPHK1. Zn(2+) is required as a cofactor.

The protein localises to the cytoplasm. The enzyme catalyses an N-acyl-L-amino acid + H2O = an L-alpha-amino acid + a carboxylate. The catalysed reaction is N-acetyl-L-methionine + H2O = L-methionine + acetate. It catalyses the reaction N-acetyl-L-glutamine + H2O = L-glutamine + acetate. In terms of biological role, catalyzes the hydrolysis of N-acetylated amino acids to acetate and free amino acids. This chain is Aminoacylase-1 (ACY1), found in Pongo abelii (Sumatran orangutan).